Reading from the N-terminus, the 473-residue chain is Cytochrome c-552 (473 aa).

An N-terminal signal peptide occupies residues 1 to 33 (MQHGDEMMKKMTGKSFALSALVAASFMAAGAMA). H93 contributes to the heme c binding site. 3 residues coordinate heme: C121, C124, and K125. Positions 159, 162, 163, 201, 204, and 205 each coordinate heme c. Ca(2+) contacts are provided by E207, Y208, K256, and Q258. Y208 is a binding site for substrate. H259 lines the substrate pocket. Positions 270, 277, 280, 281, 296, 309, 312, 313, and 388 each coordinate heme c.

Belongs to the cytochrome c-552 family. Ca(2+) is required as a cofactor. It depends on heme c as a cofactor.

It localises to the periplasm. The enzyme catalyses 6 Fe(III)-[cytochrome c] + NH4(+) + 2 H2O = 6 Fe(II)-[cytochrome c] + nitrite + 8 H(+). It functions in the pathway nitrogen metabolism; nitrate reduction (assimilation). Catalyzes the reduction of nitrite to ammonia, consuming six electrons in the process. The sequence is that of Cytochrome c-552 from Shewanella sp. (strain ANA-3).